A 538-amino-acid polypeptide reads, in one-letter code: Cytochrome P450 monooxygenase claM (538 aa).

The helical transmembrane segment at 36–56 threads the bilayer; it reads LSIGLVVLIGAISSFLLQQFL. N-linked (GlcNAc...) asparagine glycans are attached at residues N306 and N425. C472 is a heme binding site.

Belongs to the cytochrome P450 family. Requires heme as cofactor.

Its subcellular location is the membrane. The catalysed reaction is 2 nataloe emodin + reduced [NADPH--hemoprotein reductase] + O2 = cladofulvin + oxidized [NADPH--hemoprotein reductase] + 2 H2O + H(+). It participates in pigment biosynthesis. In terms of biological role, cytochrome P450 monooxygenase; part of the gene cluster that mediates the biosynthesis of the bianthraquinone cladofulvin, a conidial pigment not required for virulence but that plays a role in fitness and resistance to environmental stresses including UV light and low-temperature stress. The pathway begins with the synthesis of atrochrysone thioester by the polyketide synthase (PKS) claG. The atrochrysone carboxyl ACP thioesterase claF then breaks the thioester bond and releases the atrochrysone carboxylic acid from claG. This compound is decarboxylated by claH to yield emodin, which is further converted to chrysophanol hydroquinone by the reductase claC and the dehydratase claB. The cytochrome monooxygenase P450 claM then catalyzes the dimerization of nataloe-emodin to cladofulvin. This is Cytochrome P450 monooxygenase claM from Passalora fulva (Tomato leaf mold).